A 521-amino-acid chain; its full sequence is Bifunctional dihydrofolate reductase-thymidylate synthase (521 aa).

Positions 17–194 (NYQVVVAGTR…IRHSFVSFVR (178 aa)) constitute a DHFR domain. Residue valine 21 coordinates substrate. Residues alanine 23 and 29–35 (GIGKDGV) contribute to the NADP(+) site. Aspartate 43 is a binding site for substrate. Residues 67–69 (RKT) and 88–91 (LTRS) contribute to the NADP(+) site. Isoleucine 130 contacts substrate. Residue 131–138 (GGGQVLRE) participates in NADP(+) binding. Threonine 151 contributes to the substrate binding site. Residues 197–521 (KSVAETHESN…HQKIEMKMAV (325 aa)) form a thymidylate synthase region. Arginine 258 contacts dUMP. The active site involves cysteine 403. DUMP contacts are provided by residues histidine 404, 422-426 (QRSAD), asparagine 434, and 464-466 (HVY).

This sequence in the N-terminal section; belongs to the dihydrofolate reductase family. The protein in the C-terminal section; belongs to the thymidylate synthase family.

The catalysed reaction is (6S)-5,6,7,8-tetrahydrofolate + NADP(+) = 7,8-dihydrofolate + NADPH + H(+). The enzyme catalyses dUMP + (6R)-5,10-methylene-5,6,7,8-tetrahydrofolate = 7,8-dihydrofolate + dTMP. It participates in cofactor biosynthesis; tetrahydrofolate biosynthesis; 5,6,7,8-tetrahydrofolate from 7,8-dihydrofolate: step 1/1. Its function is as follows. Bifunctional enzyme. Involved in de novo dTMP biosynthesis. Key enzyme in folate metabolism. Can play two different roles depending on the source of dihydrofolate: de novo synthesis of tetrahydrofolate or recycling of the dihydrofolate released as one of the end products of the TS catalyzed reaction. Catalyzes an essential reaction for de novo glycine and purine synthesis, DNA precursor synthesis, and for the conversion of dUMP to dTMP. The polypeptide is Bifunctional dihydrofolate reductase-thymidylate synthase (DRTS) (Zea mays (Maize)).